Here is a 312-residue protein sequence, read N- to C-terminus: 6-hydroxy-3-succinoylpyridine 3-monooxygenase HspA (312 aa).

One can recognise an NYN domain in the interval 14-210 (IYIDGYNFYY…RSANTDLIKF (197 aa)).

It catalyses the reaction 4-(6-hydroxypyridin-3-yl)-4-oxobutanoate + 2 NADH + O2 + 2 H(+) = 2,5-dihydroxypyridine + succinate semialdehyde + 2 NAD(+) + H2O. The protein operates within alkaloid degradation; nicotine degradation. Involved in the nicotine degradation. Catalyzes the cleavage of 6-hydroxy-3-succinoylpyridine (HSP) by incorporation of oxygen at the 3-position to produce to 2,5-dihydroxypyridine (DHP) and succinic semialdehyde. The protein is 6-hydroxy-3-succinoylpyridine 3-monooxygenase HspA of Pseudomonas putida (strain DSM 28022 / S16).